The primary structure comprises 60 residues: Three-finger toxin Mnn I (60 aa).

4 cysteine pairs are disulfide-bonded: Cys3–Cys22, Cys17–Cys39, Cys41–Cys52, and Cys53–Cys58.

This sequence belongs to the three-finger toxin family. Short-chain subfamily. Type I alpha-neurotoxin sub-subfamily. Expressed by the venom gland.

The protein resides in the secreted. In terms of biological role, binds to muscle nicotinic acetylcholine receptor (nAChR) and inhibit acetylcholine from binding to the receptor, thereby impairing neuromuscular transmission. The chain is Three-finger toxin Mnn I from Micrurus nigrocinctus (Central American coral snake).